The primary structure comprises 122 residues: Serum amyloid A-3 protein (122 aa).

A signal peptide spans 1–18 (MKPSIAIILCILILGVDS). Positions 87–122 (TGHGAEDSRADQFANEWGRSGKDPNHFRPAGLPKRY) are disordered.

Belongs to the SAA family. Found in various tissues.

The protein resides in the secreted. Functionally, major acute phase reactant. Apolipoprotein of the HDL complex. In vitro exhibits antimicrobial activity against Escherichia coli, Streptococcus uberis and Pseudomonas aeruginosa. This chain is Serum amyloid A-3 protein (Saa3), found in Mus musculus (Mouse).